Consider the following 263-residue polypeptide: PDZ domain-containing protein 9 (263 aa).

The region spanning Gln-30 to Arg-109 is the PDZ domain.

The chain is PDZ domain-containing protein 9 (PDZD9) from Bos taurus (Bovine).